Consider the following 143-residue polypeptide: Large ribosomal subunit protein uL13 (143 aa).

It belongs to the universal ribosomal protein uL13 family. In terms of assembly, part of the 50S ribosomal subunit.

In terms of biological role, this protein is one of the early assembly proteins of the 50S ribosomal subunit, although it is not seen to bind rRNA by itself. It is important during the early stages of 50S assembly. This Solibacter usitatus (strain Ellin6076) protein is Large ribosomal subunit protein uL13.